A 121-amino-acid polypeptide reads, in one-letter code: uncharacterized protein (121 aa).

It to M.jannaschii MJ0989.

This is an uncharacterized protein from Methanopyrus kandleri (strain AV19 / DSM 6324 / JCM 9639 / NBRC 100938).